Reading from the N-terminus, the 264-residue chain is Expansin-B3 (264 aa).

Residues 1-25 form the signal peptide; it reads MQLFPVMLATLCIVLQLLIGSSALA. The region spanning 54-162 is the Expansin-like EG45 domain; that stretch reads GGACGYGTLV…RRTACKYRGK (109 aa). 3 disulfides stabilise this stretch: cysteine 57-cysteine 86, cysteine 89-cysteine 157, and cysteine 94-cysteine 100. In terms of domain architecture, Expansin-like CBD spans 175–256; it reads FWLSLLVEFE…NWAPKATYSS (82 aa).

Belongs to the expansin family. Expansin B subfamily.

The protein resides in the secreted. Its subcellular location is the cell wall. It is found in the membrane. May cause loosening and extension of plant cell walls by disrupting non-covalent bonding between cellulose microfibrils and matrix glucans. No enzymatic activity has been found. The polypeptide is Expansin-B3 (EXPB3) (Arabidopsis thaliana (Mouse-ear cress)).